Reading from the N-terminus, the 396-residue chain is Acetate kinase (396 aa).

A Mg(2+)-binding site is contributed by N7. K14 provides a ligand contact to ATP. A substrate-binding site is contributed by R88. Residue D145 is the Proton donor/acceptor of the active site. ATP contacts are provided by residues 205-209 (HLGNG), 279-281 (DFR), and 327-331 (GIGEN). Residue E381 participates in Mg(2+) binding.

The protein belongs to the acetokinase family. In terms of assembly, homodimer. Mg(2+) is required as a cofactor. The cofactor is Mn(2+).

It is found in the cytoplasm. It carries out the reaction acetate + ATP = acetyl phosphate + ADP. It participates in metabolic intermediate biosynthesis; acetyl-CoA biosynthesis; acetyl-CoA from acetate: step 1/2. Its function is as follows. Catalyzes the formation of acetyl phosphate from acetate and ATP. Can also catalyze the reverse reaction. This chain is Acetate kinase, found in Campylobacter jejuni subsp. jejuni serotype O:23/36 (strain 81-176).